Here is a 448-residue protein sequence, read N- to C-terminus: Trigger factor (448 aa).

The PPIase FKBP-type domain maps to 167 to 253 (GSIVRVDFVE…VKDIKRRDIP (87 aa)).

This sequence belongs to the FKBP-type PPIase family. Tig subfamily.

The protein resides in the cytoplasm. It carries out the reaction [protein]-peptidylproline (omega=180) = [protein]-peptidylproline (omega=0). Its function is as follows. Involved in protein export. Acts as a chaperone by maintaining the newly synthesized protein in an open conformation. Functions as a peptidyl-prolyl cis-trans isomerase. In Borrelia duttonii (strain Ly), this protein is Trigger factor.